Here is a 422-residue protein sequence, read N- to C-terminus: Telomerase-associated protein of 50 kDa (422 aa).

In terms of assembly, component of the telomerase holoenzyme complex, composed of the catalytic core (the catalytic subunit TERT, the telomerase RNA template component TER and TAP65/p65), which is associated with two heterotrimeric subcomplexes: (i) the replication protein A (RPA)-related subcomplex, composed of TEB1, RPA2/TEB2 and RPA3/TEB3 and (ii) the CST-like subcomplex, composed of TAP75/p75, TAP45/p45 and TAP19/p19. TEB1 and the CST-like subcomplex are tethered to the catalytic core by TAP50/p50.

It localises to the chromosome. Its subcellular location is the telomere. In terms of biological role, tethering component of the holoenzyme telomerase ribonucleoprotein (RNP) complex. Telomerase is an essential ribonucleoprotein enzyme that copies new telomeric repeats onto chromosome ends by repetitively synthesizing the short telomere-repeat sequence 5'-TTGGGG-3' using an RNA template component TER. In the telomerase holoenzyme complex, acts as a hub that anchors the two heterotrimeric subcomplexes with the catalytic core. The polypeptide is Telomerase-associated protein of 50 kDa (Tetrahymena thermophila (strain SB210)).